We begin with the raw amino-acid sequence, 658 residues long: UvrABC system protein C (658 aa).

Residues 62–140 form the GIY-YIG domain; the sequence is PKPGVYRMLD…IKRFRPPYNV (79 aa). The region spanning 250–285 is the UVR domain; it reads GAVQREIEAQMHKAAEDLDFERAAMLRDRLRAATFI.

It belongs to the UvrC family. As to quaternary structure, interacts with UvrB in an incision complex.

Its subcellular location is the cytoplasm. Functionally, the UvrABC repair system catalyzes the recognition and processing of DNA lesions. UvrC both incises the 5' and 3' sides of the lesion. The N-terminal half is responsible for the 3' incision and the C-terminal half is responsible for the 5' incision. The polypeptide is UvrABC system protein C (Novosphingobium aromaticivorans (strain ATCC 700278 / DSM 12444 / CCUG 56034 / CIP 105152 / NBRC 16084 / F199)).